We begin with the raw amino-acid sequence, 101 residues long: uncharacterized protein (101 aa).

The segment covering 1-11 (MSDEGYRELVE) has biased composition (basic and acidic residues). The interval 1–26 (MSDEGYRELVESKSAPTTPGPWSPDR) is disordered.

This is an uncharacterized protein from Torque teno canis virus (isolate Cf-TTV10).